A 147-amino-acid polypeptide reads, in one-letter code: Ubiquitin-conjugating enzyme E2 D1 (147 aa).

Positions 1 to 147 constitute a UBC core domain; the sequence is MALKRIQKEL…AREWTQKYAM (147 aa). Cys-85 acts as the Glycyl thioester intermediate in catalysis.

Belongs to the ubiquitin-conjugating enzyme family. Component of a E3 ubiquitin ligase complex containing UBE2D1, SIAH1, CACYBP/SIP, SKP1, APC and TBL1X. Interacts with RNF11. Post-translationally, autoubiquitinated.

It localises to the cytoplasm. It catalyses the reaction S-ubiquitinyl-[E1 ubiquitin-activating enzyme]-L-cysteine + [E2 ubiquitin-conjugating enzyme]-L-cysteine = [E1 ubiquitin-activating enzyme]-L-cysteine + S-ubiquitinyl-[E2 ubiquitin-conjugating enzyme]-L-cysteine.. The enzyme catalyses S-ubiquitinyl-[E1 ubiquitin-activating enzyme]-L-cysteine + [acceptor protein]-L-lysine = [E1 ubiquitin-activating enzyme]-L-cysteine + N(6)-monoubiquitinyl-[acceptor protein]-L-lysine.. It functions in the pathway protein modification; protein ubiquitination. Its function is as follows. Accepts ubiquitin from the E1 complex and catalyzes its covalent attachment to other proteins. In vitro catalyzes 'Lys-48'-linked polyubiquitination. Mediates the selective degradation of short-lived and abnormal proteins. Functions in the E6/E6-AP-induced ubiquitination of p53/TP53. Mediates ubiquitination of PEX5 and auto-ubiquitination of STUB1, TRAF6 and TRIM63/MURF1. Ubiquitinates STUB1-associated HSP90AB1 in vitro. Lacks inherent specificity for any particular lysine residue of ubiquitin. Essential for viral activation of IRF3. Mediates polyubiquitination of CYP3A4. The chain is Ubiquitin-conjugating enzyme E2 D1 (UBE2D1) from Bos taurus (Bovine).